The chain runs to 2116 residues: MEKLLDEVLAPGGPYNLTVGSWVRDHVRSIVEGAWEVRDVVTAAQKRAIVAVIPRPVFTQMQVSDHPALHAISRYTRRHWIEWGPKEALHVLIDPSPGLLREVARVERRWVALCLHRTARKLATALAETASEAWHADYVCALRGAPSGPFYVHPEDVPHGGRAVADRCLLYYTPMQMCELMRTIDATLLVAVDLWPVALAAHVGDDWDDLGIAWHLDHDGGCPADCRGAGAGPTPGYTRPCTTRIYQVLPDTAHPGRLYRCGPRLWTRDCAVAELSWEVAQHCGHQARVRAVRCTLPIRHVRSLQPSARVRLPDLVHLAEVGRWRWFSLPRPVFQRMLSYCKTLSPDAYYSERVFKFKNALCHSITLAGNVLQEGWKGTCAEEDALCAYVAFRAWQSNARLAGIMKGAKRCAADSLSVAGWLDTIWDAIKRFLGSVPLAERMEEWEQDAAVAAFDRGPLEDGGRHLDTVQPPKSPPRPEIAATWIVHAASEDRHCACAPRCDVPRERPSAPAGQPDDEALIPPWLFAERRALRCREWDFEALRARADTAAAPAPPAPRPARYPTVLYRHPAHHGPWLTLDEPGEADAALVLCDPLGQPLRGPERHFAAGAHMCAQARGLQAFVRVVPPPERPWADGGARAWAKFFRGCAWAQRLLGEPAVMHLPYTDGDVPQLIALALRTLAQQGAALALSVRDLPGGAAFDANAVTAAVRAGPRQSAAASPPPGDPPPPRRARRSQRHSDARGTPPPAPARDPPPPAPSPPAPPRAGDPVPPIPAGPADRARDAELEVACEPSGPPTSTRADPDSDIVESYARAAGPVHLRVRDIMDPPPGCKVVVNAANEGLLAGSGVCGAIFANATAALAANCRRLAPCPTGEAVATPGHGCGYTHIIHAVAPRRPRDPAALEEGEALLERAYRSIVALAAARRWACVACPLLGAGVYGWSAAESLRAALAATRTEPVERVSLHICHPDRATLTHASVLVGAGLAARRVSPPPTEPLASCPAGDPGRPAQRSASPPATPLGDATAPEPRGCQGCELCRYTRVTNDRAYVNLWLERDRGATSWAMRIPEVVVYGPEHLATHFPLNHYSVLKPAEVRPPRGMCGSDMWRCRGWHGMPQVRCTPSNAHAALCRTGVPPRASTRGGELDPNTCWLRAAANVAQAARACGAYTSAGCPKCAYGRALSEARTHEDFAALSQRWSASHADASPDGTGDPLDPLMETVGCACSRVWVGSEHEAPPDHLLVSLHRAPNGPWGVVLEVRARPEGGNPTGHFVCAVGGGPRRVSDRPHLWLAVPLSRGGGTCAATDEGLAQAYYDDLEVRRLGDDAMARAALASVQRPRKGPYNIRVWNMAAGAGKTTRILAAFTREDLYVCPTNALLHEIQAKLRARDIDIKNAATYERRLTKPLAAYRRIYIDEAFTLGGEYCAFVASQTTAEVICVGDRDQCGPHYANNCRTPVPDRWPTERSRHTWRFPDCWAARLRAGLDYDIEGERTGTFACNLWDGRQVDLHLAFSRETVRRLHEAGIRAYTVREAQGMSVGTACIHVGRDGTDVALALTRDLAIVSLTRASDALYLHELEDGSLRAAGLSAFLDAGALAELKEVPAGIDRVVAVEQAPPPLPPADGIPEAQDVPPFCPRTLEELVFGRAGHPHYADLNRVTEGEREVRYMRISRHLLNKNHTEMPGTERVLSAVCAVRRYRAGEDGSTLRTAVARQHPRPFRQIPPPRVTAGVAQEWRMTYLRERIDLTDVYTQMGVAARELTDRYARRYPEIFAGMCTAQSLSVPAFLKATLKCVDAALGPRDTEDCHAAQGKAGLEIRAWAKEWVQVMSPHFRAIQKIIMRALRPQFLVAAGHTEPEVDAWWQAHYTTNAIEVDFTEFDMNQTLATRDVELEISAALLGLPCAEDYRALRAGSYCTLRELGSTETGCERTSGEPATLLHNTTVAMCMAMRMVPKGVRWAGIFQGDDMVIFLPEGARSAALKWTPAEVGLFGFHIPVKHVSTPTPSFCGHVGTAAGLFHDVMHQAIKVLCRRFDPDVLEEQQVALLDRLRGVYAALPDTVAANAAYYDYSAERVLAIVRELTAYARGRGLDHPATIGALEEIQTPYARANLHDAD.

The interval 36-49 (EVRDVVTAAQKRAI) is required for efficient proteolysis and P150-P90 interaction. The Alphavirus-like MT domain maps to 57–247 (VFTQMQVSDH…TRPCTTRIYQ (191 aa)). The span at 457–467 (GPLEDGGRHLD) shows a compositional bias: basic and acidic residues. Disordered regions lie at residues 457-477 (GPLE…SPPR) and 712-805 (AGPR…ADPD). Pro residues-rich tracts occupy residues 721 to 730 (SPPPGDPPPP) and 745 to 776 (TPPP…PIPA). 3 short sequence motifs (pxxPxR; class II SH3-binding) span residues 727–732 (PPPPRR), 747–752 (PPAPAR), and 761–766 (PPAPPR). The region spanning 806-985 (SDIVESYARA…LTHASVLVGA (180 aa)) is the Macro domain. The segment at 992–1031 (VSPPPTEPLASCPAGDPGRPAQRSASPPATPLGDATAPEP) is disordered. Positions 1000–1301 (LASCPAGDPG…WLAVPLSRGG (302 aa)) constitute a Peptidase C27 domain. Cysteine 1152 functions as the For cysteine protease activity in the catalytic mechanism. The interaction with host CALM1 stretch occupies residues 1152–1183 (CWLRAAANVAQAARACGAYTSAGCPKCAYGRA). Zn(2+)-binding residues include cysteine 1175, cysteine 1178, cysteine 1227, and histidine 1273. An EF-hand-like region spans residues 1193–1228 (FAALSQRWSASHADASPDGTGDPLDPLMETVGCACS). Histidine 1273 acts as the For cysteine protease activity in catalysis. Positions 1320-1468 (EVRRLGDDAM…VPDRWPTERS (149 aa)) constitute a (+)RNA virus helicase ATP-binding domain. Residue 1352 to 1359 (MAAGAGKT) participates in a ribonucleoside 5'-triphosphate binding. The region spanning 1469 to 1609 (RHTWRFPDCW…ELKEVPAGID (141 aa)) is the (+)RNA virus helicase C-terminal domain. Residues 1700–1900 (YRAGEDGSTL…VELEISAALL (201 aa)) are involved in P150-P90 interaction. Residues 1870–1981 (TNAIEVDFTE…FLPEGARSAA (112 aa)) form the RdRp catalytic domain. The Human RB1 binding signature appears at 1902 to 1906 (LPCAE).

Interacts with RNA-directed RNA polymerase p90. Interacts with host CALM1; this interaction is necessary for the protease activity and viral infectivity. Interacts with host C1QBP. Interacts with the capsid protein. As to quaternary structure, interacts with human RB1/retinoblastoma protein. Interacts with protease/methyltransferase p150. Zn(2+) serves as cofactor. In terms of processing, specific enzymatic cleavage by its own cysteine protease yield mature proteins p150 and p90.

It is found in the host membrane. The protein resides in the host cytoplasm. It localises to the host perinuclear region. It carries out the reaction RNA(n) + a ribonucleoside 5'-triphosphate = RNA(n+1) + diphosphate. The enzyme catalyses a ribonucleoside 5'-triphosphate + H2O = a ribonucleoside 5'-diphosphate + phosphate + H(+). It catalyses the reaction ATP + H2O = ADP + phosphate + H(+). Probable principal replicase for the negative-strand DNA, which replicates the 40S (+) genomic RNA into (-) antigenomic RNA. It cannot replicate the (-) into (+) until cleaved into p150 and p90 mature proteins. Its function is as follows. Protease that cleaves the precursor polyprotein into two mature products. Together with RNA-directed RNA polymerase p90, replicates the 40S genomic and antigenomic RNA by recognizing replications specific signals. The heterodimer P150/p90 is probably the principal replicase for positive-strand genomic RNA and the 24S subgenomic RNA, which codes for structural proteins. Responsible for the mRNA-capping of the viral mRNAs. This function is necessary since all viral RNAs are synthesized in the cytoplasm, and host capping enzymes are restricted to the nucleus. Forms fibers late in the infection that may be involved in cell-to-cell spread of the virus RNA in the absence of virus particle formation. Functionally, together with protease/methyltransferase p150, replicates the 40S genomic and antigenomic RNA by recognizing replications specific signals. The heterodimer P150/p90 is probably the principal replicase for positive-strand genomic RNA and the 24S subgenomic RNA, which codes for structural proteins. A helicase activity is probably also present. The chain is Non-structural polyprotein p200 from Rubella virus (strain Therien) (RUBV).